The chain runs to 237 residues: uncharacterized protein (237 aa).

Residues 3-116 (RILLVEDDER…VVMAKIKSVL (114 aa)) form the Response regulatory domain. Position 52 is a 4-aspartylphosphate (D52). Residues 131-229 (SRIVELGGLT…IRGQGYQFQV (99 aa)) constitute a DNA-binding region (ompR/PhoB-type).

Post-translationally, phosphorylated by YvcQ.

The protein resides in the cytoplasm. Functionally, member of the two-component regulatory system YvcQ/YvcP. This is an uncharacterized protein from Bacillus subtilis (strain 168).